The following is a 159-amino-acid chain: Large ribosomal subunit protein uL10 (159 aa).

The protein belongs to the universal ribosomal protein uL10 family. As to quaternary structure, part of the ribosomal stalk of the 50S ribosomal subunit. The N-terminus interacts with L11 and the large rRNA to form the base of the stalk. The C-terminus forms an elongated spine to which L12 dimers bind in a sequential fashion forming a multimeric L10(L12)X complex.

Forms part of the ribosomal stalk, playing a central role in the interaction of the ribosome with GTP-bound translation factors. In Campylobacter jejuni (strain RM1221), this protein is Large ribosomal subunit protein uL10.